The primary structure comprises 82 residues: Sec-independent protein translocase protein TatA (82 aa).

The chain crosses the membrane as a helical span at residues 1–21 (MGIFDWKHWIVILIVVVLVFG). Residues 43–82 (VNTEEDDKKDQPAAQPAQPLNQPHTIDAQAQKVEEPARKD) are disordered.

Belongs to the TatA/E family. The Tat system comprises two distinct complexes: a TatABC complex, containing multiple copies of TatA, TatB and TatC subunits, and a separate TatA complex, containing only TatA subunits. Substrates initially bind to the TatABC complex, which probably triggers association of the separate TatA complex to form the active translocon.

The protein localises to the cell inner membrane. In terms of biological role, part of the twin-arginine translocation (Tat) system that transports large folded proteins containing a characteristic twin-arginine motif in their signal peptide across membranes. TatA could form the protein-conducting channel of the Tat system. This Pseudomonas aeruginosa (strain LESB58) protein is Sec-independent protein translocase protein TatA.